A 645-amino-acid chain; its full sequence is Threonine--tRNA ligase (645 aa).

In terms of domain architecture, TGS spans 1–63 (MEQINIQFPD…ETDGSIEIVT (63 aa)). The catalytic stretch occupies residues 242–540 (DHRKIGKELE…LTEETKGAFP (299 aa)). Cysteine 336, histidine 387, and histidine 517 together coordinate Zn(2+).

This sequence belongs to the class-II aminoacyl-tRNA synthetase family. In terms of assembly, homodimer. It depends on Zn(2+) as a cofactor.

It is found in the cytoplasm. It catalyses the reaction tRNA(Thr) + L-threonine + ATP = L-threonyl-tRNA(Thr) + AMP + diphosphate + H(+). Catalyzes the attachment of threonine to tRNA(Thr) in a two-step reaction: L-threonine is first activated by ATP to form Thr-AMP and then transferred to the acceptor end of tRNA(Thr). Also edits incorrectly charged L-seryl-tRNA(Thr). This is Threonine--tRNA ligase from Staphylococcus aureus (strain bovine RF122 / ET3-1).